The following is a 323-amino-acid chain: Ferrochelatase (323 aa).

Residues histidine 196 and glutamate 277 each contribute to the Fe cation site.

The protein belongs to the ferrochelatase family.

Its subcellular location is the cytoplasm. It catalyses the reaction heme b + 2 H(+) = protoporphyrin IX + Fe(2+). Its pathway is porphyrin-containing compound metabolism; protoheme biosynthesis; protoheme from protoporphyrin-IX: step 1/1. Its function is as follows. Catalyzes the ferrous insertion into protoporphyrin IX. This is Ferrochelatase from Haemophilus influenzae (strain PittEE).